The sequence spans 270 residues: Phosphatidylglycerol--prolipoprotein diacylglyceryl transferase (270 aa).

4 helical membrane-spanning segments follow: residues 19 to 39 (FPVY…LWLA), 56 to 76 (LVLI…VIFE), 92 to 112 (QGGL…ILFA), and 116 to 136 (GVSF…GQAI). Residue Arg-138 coordinates a 1,2-diacyl-sn-glycero-3-phospho-(1'-sn-glycerol). Helical transmembrane passes span 178-198 (HPTF…LLAL), 206-226 (GELF…VEGL), and 236-256 (LRIA…FIIV).

This sequence belongs to the Lgt family.

Its subcellular location is the cell membrane. It carries out the reaction L-cysteinyl-[prolipoprotein] + a 1,2-diacyl-sn-glycero-3-phospho-(1'-sn-glycerol) = an S-1,2-diacyl-sn-glyceryl-L-cysteinyl-[prolipoprotein] + sn-glycerol 1-phosphate + H(+). The protein operates within protein modification; lipoprotein biosynthesis (diacylglyceryl transfer). Its function is as follows. Catalyzes the transfer of the diacylglyceryl group from phosphatidylglycerol to the sulfhydryl group of the N-terminal cysteine of a prolipoprotein, the first step in the formation of mature lipoproteins. The protein is Phosphatidylglycerol--prolipoprotein diacylglyceryl transferase of Bacillus anthracis (strain A0248).